Here is a 494-residue protein sequence, read N- to C-terminus: Vacuolar-processing enzyme (494 aa).

An N-terminal signal peptide occupies residues 1–20; sequence MTRLASGVLITLLVALAGIA. N-linked (GlcNAc...) asparagine glycosylation occurs at Asn-151. The active site involves His-178. Cys-220 acts as the Nucleophile in catalysis. Cys-253 and Cys-267 are oxidised to a cystine. A glycan (N-linked (GlcNAc...) asparagine) is linked at Asn-336. Cystine bridges form between Cys-430-Cys-460 and Cys-442-Cys-477.

It belongs to the peptidase C13 family. High levels are seen in the flowers, a lower level expression is seen in the leaves, while very low levels are seen in the stems and roots.

Asparagine-specific endopeptidase that may be involved in processing of proteins targeted to vacuoles that accumulate during ethylene-regulated processes such as flower opening and flavedo degreening. This chain is Vacuolar-processing enzyme, found in Citrus sinensis (Sweet orange).